The following is a 464-amino-acid chain: tRNA modification GTPase MnmE (464 aa).

(6S)-5-formyl-5,6,7,8-tetrahydrofolate-binding residues include R27, E90, and K129. In terms of domain architecture, TrmE-type G spans 222 to 384; that stretch reads GIALVLAGSV…LYDKIRSLTC (163 aa). Residues 232-237, 251-257, and 276-279 each bind GTP; these read NVGKSS, SSYAGTT, and DTAG. Positions 236 and 257 each coordinate Mg(2+). K464 contributes to the (6S)-5-formyl-5,6,7,8-tetrahydrofolate binding site.

The protein belongs to the TRAFAC class TrmE-Era-EngA-EngB-Septin-like GTPase superfamily. TrmE GTPase family. In terms of assembly, homodimer. Heterotetramer of two MnmE and two MnmG subunits. K(+) serves as cofactor.

Its subcellular location is the cytoplasm. Its function is as follows. Exhibits a very high intrinsic GTPase hydrolysis rate. Involved in the addition of a carboxymethylaminomethyl (cmnm) group at the wobble position (U34) of certain tRNAs, forming tRNA-cmnm(5)s(2)U34. This is tRNA modification GTPase MnmE from Borrelia turicatae (strain 91E135).